Here is a 249-residue protein sequence, read N- to C-terminus: 3-deoxy-D-manno-octulosonic acid kinase (249 aa).

Asp175 is a catalytic residue.

The protein belongs to the protein kinase superfamily. KdkA/RfaP family.

The protein localises to the cell inner membrane. The catalysed reaction is an alpha-Kdo-(2-&gt;6)-lipid IVA + ATP = a 4-O-phospho-alpha-Kdo-(2-&gt;6)-lipid IVA + ADP + H(+). It functions in the pathway bacterial outer membrane biogenesis; LPS core biosynthesis. Its function is as follows. Catalyzes the ATP-dependent phosphorylation of the 3-deoxy-D-manno-octulosonic acid (Kdo) residue in Kdo-lipid IV(A) at the 4-OH position. In Stenotrophomonas maltophilia (strain R551-3), this protein is 3-deoxy-D-manno-octulosonic acid kinase.